A 744-amino-acid polypeptide reads, in one-letter code: Tripartite motif-containing protein 2 (744 aa).

Residue Ser10 is modified to Phosphoserine. The RING-type zinc finger occupies 23–64 (CSICLERYKNPKVLPCLHTFCERCLQNYIPAHSLTLSCPVCR). A B box-type zinc finger spans residues 113–154 (GKPLSCPNHDGNVMDFYCQSCETAMCRECTEGEHAEHPTVPL). Zn(2+) contacts are provided by Cys118, His121, Cys141, and His146. The Filamin repeat unit spans residues 320-421 (TTNAVASETV…IRGSPFKLKV (102 aa)). Phosphothreonine is present on Thr371. A phosphoserine mark is found at Ser375, Ser424, and Ser428. The disordered stretch occupies residues 432 to 462 (EGVKRRVKSPGSGHVKQKAVKRPASMYSTGK). NHL repeat units follow at residues 473-516 (IFRV…FSND), 520-563 (KSRF…FSSD), 564-605 (GKFK…FQPN), 609-652 (VTRF…FNQE), 656-699 (MLKF…FDGS), and 700-743 (GSFL…YRYL).

It belongs to the TRIM/RBCC family. Forms homooligomers. Interacts with TRIM3; this interaction reduces TRIM2 activity. Interacts with myosin V; myosin V may not be a substrate for ubiquitination. Interacts with NEFL. Interacts with phosphorylated BCL2L11. Interacts with SIRPA. RING-type zinc finger-dependent and UBE2D1-dependent autoubiquitination.

The protein localises to the cytoplasm. The enzyme catalyses S-ubiquitinyl-[E2 ubiquitin-conjugating enzyme]-L-cysteine + [acceptor protein]-L-lysine = [E2 ubiquitin-conjugating enzyme]-L-cysteine + N(6)-ubiquitinyl-[acceptor protein]-L-lysine.. It functions in the pathway protein modification; protein ubiquitination. In terms of biological role, UBE2D1-dependent E3 ubiquitin-protein ligase that mediates the ubiquitination of NEFL and of phosphorylated BCL2L11. Plays a neuroprotective function. May play a role in neuronal rapid ischemic tolerance. Plays a role in antiviral immunity and limits New World arenavirus infection independently of its ubiquitin ligase activity. The polypeptide is Tripartite motif-containing protein 2 (TRIM2) (Bos taurus (Bovine)).